A 318-amino-acid chain; its full sequence is Methionyl-tRNA formyltransferase (318 aa).

110 to 113 (SLLP) contacts (6S)-5,6,7,8-tetrahydrofolate.

It belongs to the Fmt family.

It carries out the reaction L-methionyl-tRNA(fMet) + (6R)-10-formyltetrahydrofolate = N-formyl-L-methionyl-tRNA(fMet) + (6S)-5,6,7,8-tetrahydrofolate + H(+). Its function is as follows. Attaches a formyl group to the free amino group of methionyl-tRNA(fMet). The formyl group appears to play a dual role in the initiator identity of N-formylmethionyl-tRNA by promoting its recognition by IF2 and preventing the misappropriation of this tRNA by the elongation apparatus. The chain is Methionyl-tRNA formyltransferase from Lacticaseibacillus casei (strain BL23) (Lactobacillus casei).